Consider the following 312-residue polypeptide: 4-diphosphocytidyl-2-C-methyl-D-erythritol kinase (312 aa).

Lys16 is a catalytic residue. 101–111 (PIGAGLAGGSS) contacts ATP. Residue Asp143 is part of the active site.

This sequence belongs to the GHMP kinase family. IspE subfamily.

It catalyses the reaction 4-CDP-2-C-methyl-D-erythritol + ATP = 4-CDP-2-C-methyl-D-erythritol 2-phosphate + ADP + H(+). The protein operates within isoprenoid biosynthesis; isopentenyl diphosphate biosynthesis via DXP pathway; isopentenyl diphosphate from 1-deoxy-D-xylulose 5-phosphate: step 3/6. Catalyzes the phosphorylation of the position 2 hydroxy group of 4-diphosphocytidyl-2C-methyl-D-erythritol. This Prochlorococcus marinus subsp. pastoris (strain CCMP1986 / NIES-2087 / MED4) protein is 4-diphosphocytidyl-2-C-methyl-D-erythritol kinase.